A 436-amino-acid polypeptide reads, in one-letter code: Enolase (436 aa).

Glutamine 163 serves as a coordination point for (2R)-2-phosphoglycerate. Glutamate 205 serves as the catalytic Proton donor. Mg(2+) contacts are provided by aspartate 242, glutamate 285, and aspartate 312. The (2R)-2-phosphoglycerate site is built by lysine 337, arginine 366, serine 367, and lysine 388. Lysine 337 functions as the Proton acceptor in the catalytic mechanism.

This sequence belongs to the enolase family. The cofactor is Mg(2+).

It localises to the cytoplasm. Its subcellular location is the secreted. The protein localises to the cell surface. It carries out the reaction (2R)-2-phosphoglycerate = phosphoenolpyruvate + H2O. The protein operates within carbohydrate degradation; glycolysis; pyruvate from D-glyceraldehyde 3-phosphate: step 4/5. Functionally, catalyzes the reversible conversion of 2-phosphoglycerate (2-PG) into phosphoenolpyruvate (PEP). It is essential for the degradation of carbohydrates via glycolysis. This Solidesulfovibrio magneticus (strain ATCC 700980 / DSM 13731 / RS-1) (Desulfovibrio magneticus) protein is Enolase.